The primary structure comprises 336 residues: Melanoma-associated antigen B17 (336 aa).

A compositionally biased stretch (basic residues) spans M1–Q17. Positions M1 to L108 are disordered. Composition is skewed to low complexity over residues P39–P54 and S62–S80. Residues E90–S103 are compositionally biased toward polar residues. The 228-residue stretch at L109–P336 folds into the MAGE domain.

The chain is Melanoma-associated antigen B17 (MAGEB17) from Homo sapiens (Human).